The chain runs to 191 residues: Ribonuclease HII (191 aa).

In terms of domain architecture, RNase H type-2 spans 16-191 (INLIGIDEAG…KLHRKSFKLL (176 aa)). A divalent metal cation is bound by residues aspartate 22, glutamate 23, and aspartate 110.

It belongs to the RNase HII family. It depends on Mn(2+) as a cofactor. Mg(2+) serves as cofactor.

The protein resides in the cytoplasm. The enzyme catalyses Endonucleolytic cleavage to 5'-phosphomonoester.. Its function is as follows. Endonuclease that specifically degrades the RNA of RNA-DNA hybrids. In Campylobacter jejuni subsp. doylei (strain ATCC BAA-1458 / RM4099 / 269.97), this protein is Ribonuclease HII.